The sequence spans 112 residues: MPDGWRKMGVLVFYDLPVVSPEQRLAAVRFHKFLLADGFERMHYSIYARYCGSMERAATYERRVEQALPAVGHVNLLKLTDRQMVGMRKWIRGNYRAPENAEFVPPAQYQLF.

Mg(2+) is bound at residue D15.

Belongs to the CRISPR-associated endoribonuclease Cas2 protein family. Homodimer, forms a heterotetramer with a Cas1 homodimer. It depends on Mg(2+) as a cofactor.

In terms of biological role, CRISPR (clustered regularly interspaced short palindromic repeat), is an adaptive immune system that provides protection against mobile genetic elements (viruses, transposable elements and conjugative plasmids). CRISPR clusters contain sequences complementary to antecedent mobile elements and target invading nucleic acids. CRISPR clusters are transcribed and processed into CRISPR RNA (crRNA). Functions as a ssRNA-specific endoribonuclease. Involved in the integration of spacer DNA into the CRISPR cassette. The polypeptide is CRISPR-associated endoribonuclease Cas2 2 (Rhodospirillum rubrum (strain ATCC 11170 / ATH 1.1.1 / DSM 467 / LMG 4362 / NCIMB 8255 / S1)).